A 396-amino-acid polypeptide reads, in one-letter code: MLVRSLELEEFRCFRHLHLVLPDRGLRLVGANGSGKTSLIEALYMLATTKSFRASLERHLVHRSSGSELGIPPYARLAAELFTETERSTLEIVLMVDPASGTVRKLYRRDGRSLRAVEFVGTLRVVLFSPEDLELVTGSPQQRRRYLDTILSTIDRAYLRALARYTRILEHRNSLLKSLAERDQRAADEQLAYWDEQLVTYGAYLLVARLRFLAEWGPRLRDHFQALDTQAQVLTTAYLPSIDLPESLLSELAAREVADAQLIVGARYRETLERLRPDELRRGSTLVGPHRDDVEFLLGEEPLTAFGSRGVQRLAVIAAKLAEIAVIHRVTDDWPVLLLDDALSELDQQHRAHLLATLSALPAQLILTATESDVLETPVLSSLPLFRLNDGRLEPG.

Gly-30 to Thr-37 provides a ligand contact to ATP.

It belongs to the RecF family.

It is found in the cytoplasm. The RecF protein is involved in DNA metabolism; it is required for DNA replication and normal SOS inducibility. RecF binds preferentially to single-stranded, linear DNA. It also seems to bind ATP. The sequence is that of DNA replication and repair protein RecF from Thermomicrobium roseum (strain ATCC 27502 / DSM 5159 / P-2).